A 500-amino-acid chain; its full sequence is Coiled-coil domain-containing protein 125 (500 aa).

The disordered stretch occupies residues 1–105 (MSKVPRSSSE…TDSNSELSDE (105 aa)). Over residues 10–23 (EAEDIWETEDDMTE) the composition is skewed to acidic residues. Positions 92–101 (RLSSTDSNSE) are enriched in polar residues. 2 coiled-coil regions span residues 101–237 (ELSD…LEAL) and 286–314 (STRK…TADA). S492 is subject to Phosphoserine.

As to expression, expressed in many tissues, with highest levels in spleen, thymus and bone marrow.

Its subcellular location is the cytoplasm. Its function is as follows. May be involved in the regulation of cell migration. In Mus musculus (Mouse), this protein is Coiled-coil domain-containing protein 125 (Ccdc125).